The sequence spans 478 residues: Zinc finger C3HC-type protein 1-like (478 aa).

A C3HC-type zinc finger spans residues 93 to 147 (CAKYGWSNIECDMLKCSSCNAYLCASLQPVLDFSKYKQRCVELQEALRKAHEKFC). The disordered stretch occupies residues 285–389 (LSAPNTPVSP…SSSSDTSPRG (105 aa)). The segment covering 351-363 (SMGQGESSGLSNE) has biased composition (polar residues). Residues 377 to 388 (LCSSSSSDTSPR) are compositionally biased toward low complexity.

Post-translationally, phosphorylated. May also be weakly phosphorylated on Tyr residues.

It localises to the nucleus. It is found in the nucleus envelope. Functionally, required for proper positioning of a substantial amount of TPR at the nuclear basket (NB) through interaction with TPR. This chain is Zinc finger C3HC-type protein 1-like (zc3hc1), found in Xenopus tropicalis (Western clawed frog).